We begin with the raw amino-acid sequence, 364 residues long: Phosrestin-2 (364 aa).

Belongs to the arrestin family. Phosphorylated, but does not undergo light-induced phosphorylation. In terms of tissue distribution, expressed specifically and abundantly in photoreceptor cells in retina and ocelli.

It localises to the cell projection. It is found in the rhabdomere. Regulates photoreceptor cell deactivation. Arr1 and Arr2 proteins are mediators of rhodopsin inactivation and are essential for the termination of the phototransduction cascade. Involved in regulating normal cycles of per nuclear accumulation in brain circadian neurons and thus is important for normal circadian behavior. In the dark, functions with Arr2 to promote the formation of cytosolic Bdbt foci, which are required for dco localization to photoreceptor nuclei where it phosphorylates and activates degradation of per. The sequence is that of Phosrestin-2 (Arr1) from Drosophila melanogaster (Fruit fly).